Reading from the N-terminus, the 832-residue chain is G-type lectin S-receptor-like serine/threonine-protein kinase RLK1 (832 aa).

The N-terminal stretch at 1–24 (MGSLSCSIIHLVLILQLQTFFVFS) is a signal peptide. The Extracellular segment spans residues 25–461 (QNIRNGSVPV…VPVTGNRAKK (437 aa)). N-linked (GlcNAc...) asparagine glycosylation is found at N29, N92, N100, N178, N240, and N251. Residues 37–157 (SLTASESQQI…GSEDSDEVLW (121 aa)) form the Bulb-type lectin domain. Residues 299–349 (RDNMCSPDDALGNMACGYNNICSLGNNKRPKCECPERFVLKDPSNEYGDCL) enclose the EGF-like; atypical domain. Intrachain disulfides connect C303/C320, C314/C330, and C332/C348. The 90-residue stretch at 357-446 (CRPENQTANS…DSDTFIKVRN (90 aa)) folds into the PAN domain. An N-linked (GlcNAc...) asparagine glycan is attached at N361. Intrachain disulfides connect C397–C420 and C401–C407. N446 carries N-linked (GlcNAc...) asparagine glycosylation. A helical membrane pass occupies residues 462–482 (LDWLIIACSVLLGTSAFVIFD). Topologically, residues 483–832 (TSCSYRKTKK…SLSSDPVSLV (350 aa)) are cytoplasmic. One can recognise a Protein kinase domain in the interval 531–803 (RDFTEELGRG…NVTQMLEGVI (273 aa)). ATP contacts are provided by residues 537–545 (LGRGAFGIV) and K563. The interval 622 to 638 (RRPRPSWEDRKNIAVAI) is caM-binding. D657 (proton acceptor) is an active-site residue.

Belongs to the protein kinase superfamily. Ser/Thr protein kinase family.

It localises to the cell membrane. The enzyme catalyses L-seryl-[protein] + ATP = O-phospho-L-seryl-[protein] + ADP + H(+). It carries out the reaction L-threonyl-[protein] + ATP = O-phospho-L-threonyl-[protein] + ADP + H(+). The sequence is that of G-type lectin S-receptor-like serine/threonine-protein kinase RLK1 (RLK1) from Arabidopsis thaliana (Mouse-ear cress).